Consider the following 503-residue polypeptide: Probable DNA double-strand break repair helicase HerA (503 aa).

ATP is bound by residues Arg-122, 131-136 (GGGKSN), and 478-479 (KI).

This sequence belongs to the HerA family.

The catalysed reaction is Couples ATP hydrolysis with the unwinding of duplex DNA at the replication fork by translocating in the 5'-3' direction. This creates two antiparallel DNA single strands (ssDNA). The leading ssDNA polymer is the template for DNA polymerase III holoenzyme which synthesizes a continuous strand.. It carries out the reaction ATP + H2O = ADP + phosphate + H(+). The enzyme catalyses Couples ATP hydrolysis with the unwinding of duplex DNA by translocating in the 3'-5' direction.. Involved in DNA double-strand break (DSB) repair. Probably acts with NurA to stimulate resection of the 5' strand and produce the long 3' single-strand that is required for RadA loading. Has DNA-dependent ATPase activity and DNA helicase activity. The protein is Probable DNA double-strand break repair helicase HerA of Methanocaldococcus jannaschii (strain ATCC 43067 / DSM 2661 / JAL-1 / JCM 10045 / NBRC 100440) (Methanococcus jannaschii).